We begin with the raw amino-acid sequence, 130 residues long: uncharacterized protein (130 aa).

The signal sequence occupies residues 1–19; sequence MKVLGNILWWAFVGFMAYA.

This is an uncharacterized protein from Escherichia coli (strain K12).